The following is a 221-amino-acid chain: 7-cyano-7-deazaguanine synthase (221 aa).

10 to 20 (FSGGQDSTTCL) contributes to the ATP binding site. Zn(2+) is bound by residues Cys186, Cys195, Cys198, and Cys201.

Belongs to the QueC family. In terms of assembly, homodimer. Zn(2+) serves as cofactor.

The enzyme catalyses 7-carboxy-7-deazaguanine + NH4(+) + ATP = 7-cyano-7-deazaguanine + ADP + phosphate + H2O + H(+). Its pathway is purine metabolism; 7-cyano-7-deazaguanine biosynthesis. In terms of biological role, catalyzes the ATP-dependent conversion of 7-carboxy-7-deazaguanine (CDG) to 7-cyano-7-deazaguanine (preQ(0)). The protein is 7-cyano-7-deazaguanine synthase of Geobacillus sp. (strain WCH70).